The sequence spans 102 residues: Large ribosomal subunit protein uL24 (102 aa).

This sequence belongs to the universal ribosomal protein uL24 family. As to quaternary structure, part of the 50S ribosomal subunit.

In terms of biological role, one of two assembly initiator proteins, it binds directly to the 5'-end of the 23S rRNA, where it nucleates assembly of the 50S subunit. Its function is as follows. One of the proteins that surrounds the polypeptide exit tunnel on the outside of the subunit. The protein is Large ribosomal subunit protein uL24 of Rhizobium etli (strain CIAT 652).